Reading from the N-terminus, the 512-residue chain is 2,3-bisphosphoglycerate-independent phosphoglycerate mutase (512 aa).

Residues D13 and S63 each coordinate Mn(2+). The Phosphoserine intermediate role is filled by S63. Residues H124, 154 to 155, R186, R192, 262 to 265, and K337 each bind substrate; these read RD and RPDR. 5 residues coordinate Mn(2+): D404, H408, D445, H446, and H463.

It belongs to the BPG-independent phosphoglycerate mutase family. In terms of assembly, monomer. Mn(2+) serves as cofactor.

It catalyses the reaction (2R)-2-phosphoglycerate = (2R)-3-phosphoglycerate. Its pathway is carbohydrate degradation; glycolysis; pyruvate from D-glyceraldehyde 3-phosphate: step 3/5. Its function is as follows. Essential for rapid growth and for sporulation. Catalyzes the interconversion of 2-phosphoglycerate and 3-phosphoglycerate. This Oceanobacillus iheyensis (strain DSM 14371 / CIP 107618 / JCM 11309 / KCTC 3954 / HTE831) protein is 2,3-bisphosphoglycerate-independent phosphoglycerate mutase.